The sequence spans 336 residues: Ketol-acid reductoisomerase (NADP(+)) 1 (336 aa).

The KARI N-terminal Rossmann domain maps to alanine 2 to threonine 181. NADP(+)-binding positions include tyrosine 25 to glutamine 28, arginine 48, serine 52, and aspartate 82 to glutamine 85. The active site involves histidine 107. Glycine 133 lines the NADP(+) pocket. Positions threonine 182–valine 327 constitute a KARI C-terminal knotted domain. 4 residues coordinate Mg(2+): aspartate 190, glutamate 194, glutamate 226, and glutamate 230. A substrate-binding site is contributed by serine 251.

The protein belongs to the ketol-acid reductoisomerase family. Mg(2+) serves as cofactor.

It carries out the reaction (2R)-2,3-dihydroxy-3-methylbutanoate + NADP(+) = (2S)-2-acetolactate + NADPH + H(+). It catalyses the reaction (2R,3R)-2,3-dihydroxy-3-methylpentanoate + NADP(+) = (S)-2-ethyl-2-hydroxy-3-oxobutanoate + NADPH + H(+). It participates in amino-acid biosynthesis; L-isoleucine biosynthesis; L-isoleucine from 2-oxobutanoate: step 2/4. The protein operates within amino-acid biosynthesis; L-valine biosynthesis; L-valine from pyruvate: step 2/4. Functionally, involved in the biosynthesis of branched-chain amino acids (BCAA). Catalyzes an alkyl-migration followed by a ketol-acid reduction of (S)-2-acetolactate (S2AL) to yield (R)-2,3-dihydroxy-isovalerate. In the isomerase reaction, S2AL is rearranged via a Mg-dependent methyl migration to produce 3-hydroxy-3-methyl-2-ketobutyrate (HMKB). In the reductase reaction, this 2-ketoacid undergoes a metal-dependent reduction by NADPH to yield (R)-2,3-dihydroxy-isovalerate. The polypeptide is Ketol-acid reductoisomerase (NADP(+)) 1 (Bacillus anthracis).